We begin with the raw amino-acid sequence, 780 residues long: Cullin-5 (780 aa).

At Ser-34 the chain carries Phosphoserine. Phosphothreonine is present on Thr-210. The 62-residue stretch at 711–772 (RILRTQEAII…HKYIRRDESD (62 aa)) folds into the Cullin neddylation domain. Lys-724 participates in a covalent cross-link: Glycyl lysine isopeptide (Lys-Gly) (interchain with G-Cter in NEDD8).

It belongs to the cullin family. In terms of assembly, component of multiple cullin-5-RING E3 ubiquitin-protein ligase complexes (ECS complexes, also named CRL5 complexes) formed of CUL5, Elongin BC (ELOB and ELOC), RNF7/RBX2 and a variable SOCS box domain-containing protein as substrate-specific recognition component. CUL5-containing ECS complexes specifically contain RNF7/RBX2, and not RBX1, as catalytic subunit. Component of the ECS(ASB2) complex with the substrate recognition component ASB2. Component of the ECS(ASB6) complex with the substrate recognition component ASB6. Component of the ECS(ASB7) complex with the substrate recognition component ASB7. Component of the ECS(ASB9) complex with the substrate recognition component ASB9. Component of the ECS(ASB11) complex with the substrate recognition component ASB11. Component of the ECS(ASB12) complex with the substrate recognition component ASB12. Component of the ECS(LRRC41) complex with the substrate recognition component LRRC41. Component of the ECS(SOCS1) complex with the substrate recognition component SOCS1. Component of the ECS(SOCS2) complex with the substrate recognition component SOCS2. Component of the ECS(WSB1) complex with the substrate recognition subunit WSB1. Component of the ECS(SOCS3) complex with the substrate recognition component SOCS3. Component of the ECS(SOCS7) complex with the substrate recognition component SOCS7. Component of the ECS(SPSB1) complex with the substrate recognition component SPSB1. Component of the ECS(SPSB3) complex with the substrate recognition component SPSB3. Component of the ECS(SPSB2) complex with the substrate recognition component SPSB2. Component of the ECS(SPSB4) complex with the substrate recognition component SPSB4. Component of the ECS(RAB40) complex with the substrate recognition subunit RAB40A, RAB40B or RAB40C. Component of the ECS(KLHDC1) complex with the substrate recognition component KLHDC1. Component of the ECS(PCMTD1) complex with the substrate recognition subunit PCMTD1. May also form complexes containing RBX1 and ELOA or VHL; additional evidence is however required to confirm this result in vivo. Interacts (when neddylated) with ARIH2; leading to activate the E3 ligase activity of ARIH2. Interacts with ERCC6; the interaction is induced by DNA damaging agents or inhibitors of RNA polymerase II elongation. Interacts with ELOA (via the BC-box). Interacts (unneddylated form) with DCUN1D1, DCUN1D2, DCUN1D3, DCUN1D4 and DCUN1D5; these interactions promote the cullin neddylation. As to quaternary structure, (Microbial infection) Interacts (via the substrate recognition component) with HIV-1 Vif; forming an active cullin-5-RING E3 ubiquitin-protein ligase complex (ECS complex). (Microbial infection) Interacts (via the substrate recognition component) with human adenovirus 5 proteins E1B-55K and E4-orf6. In terms of assembly, (Microbial infection) Interacts with herpes virus 8 protein LANA1; this interaction promotes the degradation of NF-kappa-B component RELA. As to quaternary structure, (Microbial infection) Interacts with molluscum contagiosum virus protein MC132; this interaction promotes the degradation of NF-kappa-B component RELA. Post-translationally, neddylated; which enhances the ubiquitination activity of ECS complexes and prevents binding of the inhibitor CAND1. Deneddylated via its interaction with the COP9 signalosome (CSN).

The protein resides in the nucleus. The protein operates within protein modification; protein ubiquitination. Its function is as follows. Core component of multiple cullin-5-RING E3 ubiquitin-protein ligase complexes (ECS complexes, also named CRL5 complexes), which mediate the ubiquitination and subsequent proteasomal degradation of target proteins. Acts a scaffold protein that contributes to catalysis through positioning of the substrate and the ubiquitin-conjugating enzyme. The functional specificity of the E3 ubiquitin-protein ligase complex depends on the variable SOCS box-containing substrate recognition component. Acts as a key regulator of neuron positioning during cortex development: component of various SOCS-containing ECS complexes, such as the ECS(SOCS7) complex, that regulate reelin signaling by mediating ubiquitination and degradation of DAB1. ECS(SOCS1) seems to direct ubiquitination of JAK2. The ECS(SOCS2) complex mediates the ubiquitination and subsequent proteasomal degradation of phosphorylated EPOR and GHR. The ECS(SPSB3) complex catalyzes ubiquitination of nuclear CGAS. ECS(KLHDC1) complex is part of the DesCEND (destruction via C-end degrons) pathway and mediates ubiquitination and degradation of truncated SELENOS selenoprotein produced by failed UGA/Sec decoding, which ends with a glycine. The ECS(ASB9) complex mediates ubiquitination and degradation of CKB. As part of some ECS complex, promotes 'Lys-11'-linked ubiquitination and degradation of BTRC. As part of a multisubunit ECS complex, polyubiquitinates monoubiquitinated POLR2A. As part of the ECS(RAB40C) complex, mediates ANKRD28 ubiquitination and degradation, thereby inhibiting protein phosphatase 6 (PP6) complex activity and focal adhesion assembly during cell migration. As part of the ECS(RAB40A) complex, mediates RHOU 'Lys-48'-linked ubiquitination and degradation, thus inhibiting focal adhesion disassembly during cell migration. As part of the ECS(RAB40B) complex, mediates LIMA1/EPLIN and RAP2 ubiquitination, thereby regulating actin cytoskeleton dynamics and stress fiber formation during cell migration. May form a cell surface vasopressin receptor. (Microbial infection) Following infection by HIV-1 virus, CUL5 associates with HIV-1 Vif proteins and forms a cullin-5-RING E3 ubiquitin-protein ligase complex (ECS complex) that catalyzes ubiquitination and degradation of APOBEC3F and APOBEC3G. The complex can also ubiquitinate APOBEC3H to some extent. In terms of biological role, (Microbial infection) Seems to be involved in proteasomal degradation of p53/TP53 stimulated by adenovirus E1B-55 kDa protein. The chain is Cullin-5 from Homo sapiens (Human).